Reading from the N-terminus, the 554-residue chain is (E)-nerolidol synthase TPS18VF (554 aa).

(2E,6E)-farnesyl diphosphate-binding residues include R276, D313, D317, R455, and D458. Positions 313 and 317 each coordinate Mg(2+). The DDXXD motif signature appears at 313–317 (DDIFD). Mg(2+)-binding residues include D458, S462, and E466.

This sequence belongs to the terpene synthase family. Tpsb subfamily. Requires Mg(2+) as cofactor. Mn(2+) serves as cofactor. As to expression, highly expressed in glandular trichomes.

It catalyses the reaction (2E,6E)-farnesyl diphosphate + H2O = (6E)-nerolidol + diphosphate. It carries out the reaction (2E)-geranyl diphosphate + H2O = (S)-linalool + diphosphate. Its pathway is secondary metabolite biosynthesis; terpenoid biosynthesis. In terms of biological role, involved in sesquiterpene olefins biosynthesis, constituants of cannabinoids and terpenoids-rich resins. Catalyzes primarily the conversion of (2E)-farnesyl diphosphate to (E)-nerolidol, and the conversion of (2E)-geranyl diphosphate to (+)linalool. In Cannabis sativa (Hemp), this protein is (E)-nerolidol synthase TPS18VF.